A 1376-amino-acid polypeptide reads, in one-letter code: DNA-directed RNA polymerase subunit beta'' (1376 aa).

Positions 221, 290, 297, and 300 each coordinate Zn(2+). Residues 895–919 (PSGSGFPSDNELDHSNRNPFSSSYP) form a disordered region.

It belongs to the RNA polymerase beta' chain family. RpoC2 subfamily. In plastids the minimal PEP RNA polymerase catalytic core is composed of four subunits: alpha, beta, beta', and beta''. When a (nuclear-encoded) sigma factor is associated with the core the holoenzyme is formed, which can initiate transcription. It depends on Zn(2+) as a cofactor.

It localises to the plastid. The protein resides in the chloroplast. It catalyses the reaction RNA(n) + a ribonucleoside 5'-triphosphate = RNA(n+1) + diphosphate. DNA-dependent RNA polymerase catalyzes the transcription of DNA into RNA using the four ribonucleoside triphosphates as substrates. The polypeptide is DNA-directed RNA polymerase subunit beta'' (Pelargonium hortorum (Common geranium)).